Consider the following 320-residue polypeptide: Foldase protein PrsA (320 aa).

An N-terminal signal peptide occupies residues 1-20 (MKMINKLIVPVTASALLLGA). Cys-21 carries N-palmitoyl cysteine lipidation. Cys-21 carries S-diacylglycerol cysteine lipidation. The 107-residue stretch at 139 to 245 (EDSKKASHIL…FGYHIIKADK (107 aa)) folds into the PpiC domain. The tract at residues 159–198 (EGLDDKEAKQKAEEIQKEVSKDPSKFGEIAKKESMDTGSA) is disordered.

Belongs to the PrsA family.

The protein resides in the cell membrane. The enzyme catalyses [protein]-peptidylproline (omega=180) = [protein]-peptidylproline (omega=0). Its function is as follows. Plays a major role in protein secretion by helping the post-translocational extracellular folding of several secreted proteins. In Staphylococcus aureus (strain MRSA252), this protein is Foldase protein PrsA.